A 291-amino-acid chain; its full sequence is D-alanine--D-alanine ligase (291 aa).

Positions 99 to 291 constitute an ATP-grasp domain; it reads KRIVKSLGIN…FKKLISIIIT (193 aa). 125 to 179 contacts ATP; it reads EWNKFPAVVKPVREGSSVGLKIVESLEELKEYALDLLKKTERVMVEEFVEGRDMT. Mg(2+) contacts are provided by Asp245, Glu258, and Asn260.

Belongs to the D-alanine--D-alanine ligase family. Requires Mg(2+) as cofactor. Mn(2+) is required as a cofactor.

Its subcellular location is the cytoplasm. The enzyme catalyses 2 D-alanine + ATP = D-alanyl-D-alanine + ADP + phosphate + H(+). It participates in cell wall biogenesis; peptidoglycan biosynthesis. Its function is as follows. Cell wall formation. In Aquifex aeolicus (strain VF5), this protein is D-alanine--D-alanine ligase.